A 197-amino-acid polypeptide reads, in one-letter code: Shikimate kinase (197 aa).

Position 15–20 (15–20 (GSGKSS)) interacts with ATP. Position 19 (serine 19) interacts with Mg(2+). Aspartate 37, arginine 61, and glycine 83 together coordinate substrate. Arginine 121 is an ATP binding site. Arginine 148 contributes to the substrate binding site.

This sequence belongs to the shikimate kinase family. As to quaternary structure, monomer. It depends on Mg(2+) as a cofactor.

The protein localises to the cytoplasm. It carries out the reaction shikimate + ATP = 3-phosphoshikimate + ADP + H(+). It participates in metabolic intermediate biosynthesis; chorismate biosynthesis; chorismate from D-erythrose 4-phosphate and phosphoenolpyruvate: step 5/7. Functionally, catalyzes the specific phosphorylation of the 3-hydroxyl group of shikimic acid using ATP as a cosubstrate. The protein is Shikimate kinase of Chlorobium phaeovibrioides (strain DSM 265 / 1930) (Prosthecochloris vibrioformis (strain DSM 265)).